The primary structure comprises 359 residues: Histidinol-phosphate aminotransferase (359 aa).

The residue at position 217 (Lys-217) is an N6-(pyridoxal phosphate)lysine.

It belongs to the class-II pyridoxal-phosphate-dependent aminotransferase family. Histidinol-phosphate aminotransferase subfamily. In terms of assembly, homodimer. The cofactor is pyridoxal 5'-phosphate.

It carries out the reaction L-histidinol phosphate + 2-oxoglutarate = 3-(imidazol-4-yl)-2-oxopropyl phosphate + L-glutamate. Its pathway is amino-acid biosynthesis; L-histidine biosynthesis; L-histidine from 5-phospho-alpha-D-ribose 1-diphosphate: step 7/9. The chain is Histidinol-phosphate aminotransferase from Salmonella newport (strain SL254).